We begin with the raw amino-acid sequence, 236 residues long: Demethylmenaquinone methyltransferase (236 aa).

Residues T62, D80, 107–108, and S124 contribute to the S-adenosyl-L-methionine site; that span reads DA.

Belongs to the class I-like SAM-binding methyltransferase superfamily. MenG/UbiE family.

It carries out the reaction a 2-demethylmenaquinol + S-adenosyl-L-methionine = a menaquinol + S-adenosyl-L-homocysteine + H(+). It functions in the pathway quinol/quinone metabolism; menaquinone biosynthesis; menaquinol from 1,4-dihydroxy-2-naphthoate: step 2/2. In terms of biological role, methyltransferase required for the conversion of demethylmenaquinol (DMKH2) to menaquinol (MKH2). This Thermobifida fusca (strain YX) protein is Demethylmenaquinone methyltransferase.